The sequence spans 256 residues: Type III pantothenate kinase (256 aa).

6–13 (DAGNSRIK) lines the ATP pocket. Substrate contacts are provided by residues Y90 and 97–100 (GSDR). D99 acts as the Proton acceptor in catalysis. Position 123 (T123) interacts with ATP. A substrate-binding site is contributed by T187.

The protein belongs to the type III pantothenate kinase family. As to quaternary structure, homodimer. It depends on NH4(+) as a cofactor. K(+) serves as cofactor.

The protein localises to the cytoplasm. It catalyses the reaction (R)-pantothenate + ATP = (R)-4'-phosphopantothenate + ADP + H(+). It functions in the pathway cofactor biosynthesis; coenzyme A biosynthesis; CoA from (R)-pantothenate: step 1/5. In terms of biological role, catalyzes the phosphorylation of pantothenate (Pan), the first step in CoA biosynthesis. The polypeptide is Type III pantothenate kinase (Burkholderia mallei (strain ATCC 23344)).